Reading from the N-terminus, the 453-residue chain is MKTKFCTGGEAEPSPLGLLLSCGGSAAPTPGVGQQRDAAGELESKQLGGRSQPLALPPPPPPPLPLPPPPSPPLADEQPEPRTRRRAYLWCKEFLPGAWRGLREDQFHISVIRGGLSNMLFQCSLPDSIASVGDEPRKVLLRLYGAILKMRSCNKEGSEQAQNENEFQGAEAMVLESVMFAILAERSLGPKLYGIFPQGRLEQFIPSRRLDTEELCLPDISAEIAEKMATFHGMKMPFNKEPKWLFGTMEKYLNQVLRLKFSREARVQQLHKFLSYNLPLELENLRSLLQYTRSPVVFCHNDCQEGNILLLEGQENSEKQKLMLIDFEYSSYNYRGFDIGNHFCEWMYDYTYEKYPFFRANIQKYPTRKQQLHFISSYLTTFQNDFESLSSEEQSATKEDMLLEVNRFALASHFLWGLWSIVQAKISSIEFGYMEYAQARFDAYFDQKRKLGV.

A disordered region spans residues 22 to 81 (CGGSAAPTPGVGQQRDAAGELESKQLGGRSQPLALPPPPPPPLPLPPPPSPPLADEQPEP). Positions 55-73 (ALPPPPPPPLPLPPPPSPP) are enriched in pro residues. Phosphoserine is present on Ser-71. Residues 113–119 (RGGLSNM), Arg-142, and 203–209 (QFIPSRR) contribute to the ATP site. Position 115 to 117 (115 to 117 (GLS)) interacts with phosphocholine. Lys-243 is subject to N6-acetyllysine. A Phosphoserine modification is found at Ser-275. 2 residues coordinate ATP: Gln-304 and Asp-326.

It belongs to the choline/ethanolamine kinase family. In terms of assembly, heterodimer with CHKB. Homodimer. As to quaternary structure, monomer; acetylation by KAT5 promotes dissociation of the homodimer and monomerization. Post-translationally, phosphorylated at Ser-275 by AMPK in response to glucose deprivation, leading to localization to lipid droplets. Acetylated by KAT5 at Lys-243 following phosphorylation by AMPK, leading to monomerization and conversion into a tyrosine-protein kinase. Testis, brain, lung, kidney and liver.

The protein resides in the cytoplasm. Its subcellular location is the cytosol. It localises to the lipid droplet. It catalyses the reaction choline + ATP = phosphocholine + ADP + H(+). The catalysed reaction is ethanolamine + ATP = phosphoethanolamine + ADP + H(+). It carries out the reaction L-tyrosyl-[protein] + ATP = O-phospho-L-tyrosyl-[protein] + ADP + H(+). The protein operates within phospholipid metabolism; phosphatidylcholine biosynthesis; phosphocholine from choline: step 1/1. Its pathway is phospholipid metabolism; phosphatidylethanolamine biosynthesis; phosphatidylethanolamine from ethanolamine: step 1/3. In terms of biological role, plays a key role in phospholipid biosynthesis by catalyzing the phosphorylation of free choline to phosphocholine, the first step in phosphatidylcholine biosynthesis. Also phosphorylates ethanolamine, thereby contributing to phosphatidylethanolamine biosynthesis. Has higher activity with choline. Functionally, this isoform plays a key role in lipolysis of lipid droplets following glucose deprivation. In response to glucose deprivation, phosphorylated by AMPK, promoting localization to lipid droplets. Phosphorylation is followed by acetylation by KAT5, leading to dissociation of the homodimer into a monomer. Monomeric CHKA isoform 1 is converted into a tyrosine-protein kinase, which phosphorylates lipid droplet structural proteins PLIN2 and PLIN3, leading to lipolysis of lipid droplets. The chain is Choline kinase alpha (Chka) from Rattus norvegicus (Rat).